The primary structure comprises 603 residues: MPAPGAPLSRTSRLLLLLLFKVSVSAALSFVPEPRNGTCLGESCSPLIPRRSRDAGGPRNSARDALRVHVPREKLEAEVRGATSWDLPPPRGGDTGVIEEAAASGPLGPPTKPPGAWRWKGAQGKEPSGHLGRREPTDSQLFRQTSERGEMSSKRDEIPQGSQEHSVKTEPEPRDLFYWPRKTGQLQGSHYRPSAVHEGRTLAPPGRALPQNGSADDWVPDQGGPRRGNSTNRRVRLKNPFYPLTQESYGAYAVMCLSVVIFGTGIIGNLAVMCIVCHNYYMRSISNSLLANLAFWDFLIIFFCLPLVIFHELTKKWLLEDFSCKIVPYIEVASLGVTTFTLCALCIDRFRAATNVQMYYEMIENCSSTTAKLAVIWVGALLLALPEVVLRQLSKEDLGFSGQAPAERCVIKISPDLPDTIYVLALTYDGARLWWYFGCYFCLPTLFTITCSLVTARKIRKAEKASTRGNKRQIHLESQMNCTVVALTILYGFCIIPENICNIVTAYMATGVSQQTMDLLNIISQFLLFFKSCVTPVLLFCLCRPFSRAFMECCCCCCEECIQKSSTVTSDDNDNEYTTELELSPFSTIRREMSTFASVGTHC.

Positions 1–26 (MPAPGAPLSRTSRLLLLLLFKVSVSA) are cleaved as a signal peptide. Topologically, residues 27 to 255 (ALSFVPEPRN…QESYGAYAVM (229 aa)) are extracellular. Asparagine 36 is a glycosylation site (N-linked (GlcNAc...) asparagine). The interval 39–232 (CLGESCSPLI…GGPRRGNSTN (194 aa)) is disordered. Basic and acidic residues-rich tracts occupy residues 51–79 (RSRD…EAEV), 145–158 (TSER…RDEI), and 165–175 (HSVKTEPEPRD). 2 N-linked (GlcNAc...) asparagine glycosylation sites follow: asparagine 212 and asparagine 229. The chain crosses the membrane as a helical span at residues 256–276 (CLSVVIFGTGIIGNLAVMCIV). Residues 277–289 (CHNYYMRSISNSL) lie on the Cytoplasmic side of the membrane. A helical membrane pass occupies residues 290 to 310 (LANLAFWDFLIIFFCLPLVIF). At 311–325 (HELTKKWLLEDFSCK) the chain is on the extracellular side. Cysteine 324 and cysteine 409 are disulfide-bonded. A helical membrane pass occupies residues 326–346 (IVPYIEVASLGVTTFTLCALC). The Cytoplasmic segment spans residues 347 to 369 (IDRFRAATNVQMYYEMIENCSST). Residues 370 to 390 (TAKLAVIWVGALLLALPEVVL) traverse the membrane as a helical segment. Residues 391–433 (RQLSKEDLGFSGQAPAERCVIKISPDLPDTIYVLALTYDGARL) lie on the Extracellular side of the membrane. A helical transmembrane segment spans residues 434 to 454 (WWYFGCYFCLPTLFTITCSLV). The Cytoplasmic segment spans residues 455–483 (TARKIRKAEKASTRGNKRQIHLESQMNCT). A helical transmembrane segment spans residues 484-504 (VVALTILYGFCIIPENICNIV). Topologically, residues 505–521 (TAYMATGVSQQTMDLLN) are extracellular. A helical membrane pass occupies residues 522-542 (IISQFLLFFKSCVTPVLLFCL). The Cytoplasmic portion of the chain corresponds to 543 to 603 (CRPFSRAFME…STFASVGTHC (61 aa)).

This sequence belongs to the G-protein coupled receptor 1 family. Forms a complex with PRKN, STUB1 and HSP70. The amount of STUB1 in the complex increases during ER stress. STUB1 promotes the dissociation of HSP70 from PRKN, thus facilitating PRKN-mediated GPR37 ubiquitination. Interacts with PACRG. The N-terminus is cleaved by ADAM10 metalloproteinase; mediating limited proteolysis leading to the release of receptor ectodomain by shedding. In addition, cleaved by FURIN between Arg-53 and Asp-54. Post-translationally, ubiquitinated by PRKN in the presence of UBE2E1 and UBE2L3 in the endoplasmic reticulum. The unfolded form is specifically ubiquitinated by SYVN1, which promotes its proteasomal degradation and prevents neuronal cell death. In terms of tissue distribution, highly expressed in the brain. High levels of expression were seen in fiber tracts such as the corpus callosum, anterior commissure, fornix, internal capsule, cerebral peduncles, and stria terminalis. Additionally, moderate levels of expression were seen in the pyramidal tracts and cerebellar peduncles, as well as in the spinal tract of the trigeminal nerve and the spinal fasciculi.

The protein resides in the cell projection. It is found in the dendrite. Its subcellular location is the synapse. It localises to the cell membrane. The protein localises to the endoplasmic reticulum membrane. Its function is as follows. G-protein-coupled receptor that plays a role in several physiological pathways such as resolution of inflammatory pain and oligodendrocyte differentiation. Acts as a receptor for several ligands including prosaposin, osteocalcin or neuroprotectin D1. Ligand binding induces endocytosis, followed by an ERK phosphorylation cascade. Acts as a receptor for osteocalcin (OCN) to regulate oligodendrocyte differentiation and central nervous system myelination. Mechanistically, plays a negative role in oligodendrocyte differentiation and myelination during development via activation of the ERK1/2 signaling pathway. Therefore, regulates the stability of myelin or resistance of myelin itself to demyelination. Upon activation by neuroprotectin D1 (NPD1), promotes the activation of phagocytosis in macrophages as well as the shift in cytokine release toward an anti-inflammatory profile, and thus helps to reverse inflammatory pain. In addition, the increased macrophage phagocytosis mediates protection against sepsis upon pathogen infection. Additionally, extracellular vesicles derived from efferocyte express prosaposin, which binds to macrophage GPR37 to increase expression of the efferocytosis receptor TIM4 via an ERK-AP1-dependent signaling axis, leading to increased macrophage efferocytosis efficiency and accelerated resolution of inflammation. May also act as a maturation factor of LRP6, protecting LRP6 from the endoplasmic reticulum (ER)-associated protein degradation (ERAD) and thereby promoting the Wnt/beta-catenin signaling pathway. The chain is Prosaposin receptor GPR37 (Gpr37) from Rattus norvegicus (Rat).